A 254-amino-acid polypeptide reads, in one-letter code: Low affinity immunoglobulin gamma Fc region receptor III-A (254 aa).

A signal peptide spans 1-16 (MWQLLLPTALLLLVSA). Residues 17–208 (GMRAEDLPKA…ISSFFPPGYQ (192 aa)) are Extracellular-facing. Ig-like C2-type domains follow at residues 24-105 (PKAV…LEVH) and 107-189 (GWLL…VNIT). 2 disulfides stabilise this stretch: Cys47/Cys89 and Cys128/Cys172. 3 N-linked (GlcNAc...) asparagine glycosylation sites follow: Asn56, Asn63, and Asn82. Asn180 and Asn187 each carry an N-linked (GlcNAc...) asparagine glycan. The helical transmembrane segment at 209 to 229 (VSFCLVMVLLFAVDTGLYFSM) threads the bilayer. Over 230–254 (KKSIPSSTRDWEDHKFKWSKDPQDK) the chain is Cytoplasmic.

In terms of assembly, forms a heterooligomeric complex with ITAM-containing signaling subunits, either a homodimer of CD247, a homodimer of FCER1G or a heterodimer of CD247 and FCER1G. Interacts (via transmembrane domain) with signaling subunits; this interaction is a prerequisite for receptor complex expression on the cell surface and intracellular signal transduction. Binds the Fc region of antigen-complexed IgG with a preference for IgG1 and IgG3 isotypes. Interacts with CD2; this interaction is involved in NK cell activation and cytotoxicity. Interacts with S100A4; this interaction inhibits PKC-dependent phosphorylation of FCGR3A. Glycosylated. Glycosylation plays an inhibitory role in the interaction with IgG1 and IgG2. Post-translationally, undergoes rapid ectodomain shedding upon NK cell stimulation. The soluble form is produced by a proteolytic cleavage mediated by ADAM17. Repeated stimulation causes receptor shedding, a mechanism that allows for increased NK cell motility and detachment from opsonized target cells while avoiding activation-induced NK cell apoptosis. Lymphocytes and monocytes.

The protein localises to the cell membrane. It localises to the secreted. Receptor for the invariable Fc fragment of immunoglobulin gamma (IgG). Optimally activated upon binding of clustered antigen-IgG complexes displayed on cell surfaces, triggers lysis of antibody-coated cells, a process known as antibody-dependent cellular cytotoxicity (ADCC). Does not bind free monomeric IgG, thus avoiding inappropriate effector cell activation in the absence of antigenic trigger. Mediates IgG effector functions on natural killer (NK) cells. Binds antigen-IgG complexes generated upon infection and triggers NK cell-dependent cytokine production and degranulation to limit viral load and propagation. Involved in the generation of memory-like adaptive NK cells capable to produce high amounts of IFNG and to efficiently eliminate virus-infected cells via ADCC. Regulates NK cell survival and proliferation, in particular by preventing NK cell progenitor apoptosis. Fc-binding subunit that associates with CD247 and/or FCER1G adapters to form functional signaling complexes. Following the engagement of antigen-IgG complexes, triggers phosphorylation of immunoreceptor tyrosine-based activation motif (ITAM)-containing adapters with subsequent activation of phosphatidylinositol 3-kinase signaling and sustained elevation of intracellular calcium that ultimately drive NK cell activation. The ITAM-dependent signaling coupled to receptor phosphorylation by PKC mediates robust intracellular calcium flux that leads to production of pro-inflammatory cytokines, whereas in the absence of receptor phosphorylation it mainly activates phosphatidylinositol 3-kinase signaling leading to cell degranulation. Costimulates NK cells and trigger lysis of target cells independently of IgG binding. Mediates the antitumor activities of therapeutic antibodies. Upon ligation on monocytes triggers TNFA-dependent ADCC of IgG-coated tumor cells. Mediates enhanced ADCC in response to afucosylated IgGs. The sequence is that of Low affinity immunoglobulin gamma Fc region receptor III-A (FCGR3A) from Macaca fascicularis (Crab-eating macaque).